The sequence spans 233 residues: Ribosomal RNA large subunit methyltransferase E (233 aa).

S-adenosyl-L-methionine-binding residues include G80, W82, D108, D124, and D148. The active-site Proton acceptor is the K188.

This sequence belongs to the class I-like SAM-binding methyltransferase superfamily. RNA methyltransferase RlmE family.

Its subcellular location is the cytoplasm. The enzyme catalyses uridine(2552) in 23S rRNA + S-adenosyl-L-methionine = 2'-O-methyluridine(2552) in 23S rRNA + S-adenosyl-L-homocysteine + H(+). Specifically methylates the uridine in position 2552 of 23S rRNA at the 2'-O position of the ribose in the fully assembled 50S ribosomal subunit. This Ruegeria pomeroyi (strain ATCC 700808 / DSM 15171 / DSS-3) (Silicibacter pomeroyi) protein is Ribosomal RNA large subunit methyltransferase E.